The primary structure comprises 258 residues: Dihydroorotate dehydrogenase B (NAD(+)), electron transfer subunit (258 aa).

Residues 2-100 (ILKENLTVVS…LGPQGNGFDL (99 aa)) form the FAD-binding FR-type domain. Residues 51-54 (RPIS), 68-70 (IYR), and 75-76 (GT) contribute to the FAD site. Cysteine 220, cysteine 225, cysteine 228, and cysteine 244 together coordinate [2Fe-2S] cluster.

The protein belongs to the PyrK family. Heterotetramer of 2 PyrK and 2 PyrD type B subunits. [2Fe-2S] cluster serves as cofactor. Requires FAD as cofactor.

Its pathway is pyrimidine metabolism; UMP biosynthesis via de novo pathway; orotate from (S)-dihydroorotate (NAD(+) route): step 1/1. In terms of biological role, responsible for channeling the electrons from the oxidation of dihydroorotate from the FMN redox center in the PyrD type B subunit to the ultimate electron acceptor NAD(+). The chain is Dihydroorotate dehydrogenase B (NAD(+)), electron transfer subunit from Streptococcus mutans serotype c (strain ATCC 700610 / UA159).